Consider the following 596-residue polypeptide: Beta-fructofuranosidase, insoluble isoenzyme 7 (596 aa).

Positions 1–24 (MARLGLAVCAASFHLFLLLASTSS) are cleaved as a signal peptide. Substrate-binding positions include 51–54 (WQND), Gln-70, and Trp-78. Asp-54 is an active-site residue. N-linked (GlcNAc...) asparagine glycosylation occurs at Asn-82. Substrate-binding positions include 115-116 (WS), 179-180 (RD), and Glu-234. An N-linked (GlcNAc...) asparagine glycan is attached at Asn-330. Cys-432 and Cys-478 are oxidised to a cystine. Asn-552 carries N-linked (GlcNAc...) asparagine glycosylation.

Belongs to the glycosyl hydrolase 32 family. In terms of tissue distribution, expressed in roots, leaves and flowers. Weakly expressed in seeds.

It localises to the secreted. The protein resides in the extracellular space. Its subcellular location is the apoplast. It is found in the cell wall. The catalysed reaction is Hydrolysis of terminal non-reducing beta-D-fructofuranoside residues in beta-D-fructofuranosides.. Its function is as follows. May play a role in sucrose partitioning during seed development. The sequence is that of Beta-fructofuranosidase, insoluble isoenzyme 7 (CIN7) from Oryza sativa subsp. japonica (Rice).